The following is a 287-amino-acid chain: 4-hydroxybenzoate octaprenyltransferase (287 aa).

A run of 9 helical transmembrane segments spans residues 21–41 (VGIF…AKGA), 44–64 (FKIA…GCIV), 91–111 (VTEA…LVLL), 112–132 (LNRL…VYPF), 139–159 (LPQL…FAAT), 160–180 (VGHV…WPIV), 211–231 (LMIG…GWYL), 235–255 (YWFY…QFLI), and 263–283 (CFAA…GILL).

This sequence belongs to the UbiA prenyltransferase family. The cofactor is Mg(2+).

The protein resides in the cell inner membrane. The enzyme catalyses all-trans-octaprenyl diphosphate + 4-hydroxybenzoate = 4-hydroxy-3-(all-trans-octaprenyl)benzoate + diphosphate. It functions in the pathway cofactor biosynthesis; ubiquinone biosynthesis. Its function is as follows. Catalyzes the prenylation of para-hydroxybenzoate (PHB) with an all-trans polyprenyl group. Mediates the second step in the final reaction sequence of ubiquinone-8 (UQ-8) biosynthesis, which is the condensation of the polyisoprenoid side chain with PHB, generating the first membrane-bound Q intermediate 3-octaprenyl-4-hydroxybenzoate. The sequence is that of 4-hydroxybenzoate octaprenyltransferase from Coxiella burnetii (strain CbuK_Q154) (Coxiella burnetii (strain Q154)).